The chain runs to 23 residues: Phospholipase A1 verutoxin-1 (23 aa).

This sequence belongs to the AB hydrolase superfamily. Lipase family. Post-translationally, contains six disulfide bonds. Expressed by the venom gland.

It localises to the secreted. It carries out the reaction a 1,2-diacyl-sn-glycero-3-phosphocholine + H2O = a 2-acyl-sn-glycero-3-phosphocholine + a fatty acid + H(+). It catalyses the reaction 1-(9Z-octadecenoyl)-2-hexadecanoyl-sn-glycero-3-phosphocholine + H2O = 2-hexadecanoyl-sn-glycero-3-phosphocholine + (9Z)-octadecenoate + H(+). The enzyme catalyses a 1-acyl-sn-glycero-3-phosphocholine + H2O = sn-glycerol 3-phosphocholine + a fatty acid + H(+). It participates in phospholipid metabolism. Its activity is regulated as follows. Activity is maximal in the presence of calcium. However, unlike phospholipases A2 whose catalytic activity is strictly calcium-dependent, this enzyme shows considerable catalytic activity on phosphatidylcholine emulsified in calcium free solution; the catalytic activity of VT-1 assayed in the absence of calcium ions is 18-20% of that assayed in solution containing calcium ions. Its function is as follows. Catalyzes the hydrolysis of glycerophospholipids such as phosphatidylcholine (1,2-diacyl-sn-glycero-3-phosphocholine) and has a moderate activity to hydrolyze lysoglycerophospholipids such as lysophosphatidylcholine (1-acyl-sn-glycero-3-phosphocholine), but is unable to hydrolyze sphingomyelin. Liberates the fatty acid from the sn-1 position of 1,2-diacyl-sn-glycero-3-phosphocholine mainly, indicating phospholipase activity of the A1 type. In addition to acting as an allergen, it possesses a moderate hemolytic activity on red blood cells of mice (3% of hemolysis at 3.0 ug/ml). This chain is Phospholipase A1 verutoxin-1, found in Vespa velutina (Asian yellow-legged hornet).